A 1078-amino-acid polypeptide reads, in one-letter code: Rho family-interacting cell polarization regulator 2 (1078 aa).

Phosphoserine is present on residues Ser46 and Ser62. Residues 80–138 (MHNLGHKNNNTPKEPQPKRVEEVYRALKNGLDEYLEFHQTELDKLTAQLKDMKRNSRLG) are involved in cell filopodia formation. A coiled-coil region spans residues 108 to 137 (NGLDEYLEFHQTELDKLTAQLKDMKRNSRL). Position 366 is a phosphoserine (Ser366). The segment covering 488 to 508 (SSLSSQNEGTEDSSSASSRNS) has biased composition (polar residues). Residues 488 to 534 (SSLSSQNEGTEDSSSASSRNSLGEDHEPKSHPKSDTVEPGKPGVATR) are disordered. A compositionally biased stretch (basic and acidic residues) spans 509–525 (LGEDHEPKSHPKSDTVE). Ser582 bears the Phosphoserine mark.

It belongs to the RIPOR family. Homooligomer; homooligomerization is regulated by RHOC and leads to the formation of concatemers through the association of N- and C-termini. Interacts (phosphorylated form) with 14-3-3 proteins; these interactions occur during myogenic cell differentiation and also induces T cell proliferation arrest. Interacts (phosphorylated form) with HDAC6; this interaction occurs during early myogenic differentiation, prevents HDAC6 to deacetylate tubulin and also induces T cell proliferation arrest. Interacts with DYSF; this interaction occurs during early myogenic differentiation. Interacts with MYOF. Interacts (via active GTP- or inactive GDP-bound forms) with RHOA; this interaction is direct, blocks the loading of GTP to RHOA and decreases upon chemokine CCL19 stimulation in primary T lymphocytes. Interacts with RHOC. Interacts (via phosphorylated form) with YWHAB; this interaction occurs in a chemokine-dependent manner and does not compete for binding of RIPOR2 with RHOA nor blocks inhibition of RIPOR2-mediated RHOA activity. Interacts with YWHAE. Interacts with YWHAQ. Post-translationally, phosphorylated. Chemokine-induced phosphorylation in neutrophils occurs in a PKC- and AKT-dependent manner, resulting in RIPOR2 interaction with YWHAB and stabilization. Phosphorylated by PKCA, AKT1 and MAPKAPK1A; in vitro. As to expression, expressed in the cochlea. Expressed in inner hair cells and outer hair cells and Hensen's cells (at protein level). Expressed in the brain, cerebellum, spinal cord, retina, heart, spleen liver, kidney, bladder, muscle and lung. Expressed in the cochlea of the inner ear.

The protein resides in the cytoplasm. The protein localises to the cytoskeleton. It is found in the cell projection. It localises to the filopodium. Its subcellular location is the stereocilium. The protein resides in the stereocilium membrane. The protein localises to the apical cell membrane. In terms of biological role, acts as an inhibitor of the small GTPase RHOA and plays several roles in the regulation of myoblast and hair cell differentiation, lymphocyte T proliferation and neutrophil polarization. Plays a role in fetal mononuclear myoblast differentiation by promoting filopodia and myotube formation. Maintains naive T lymphocytes in a quiescent state and prevents chemokine-induced T lymphocyte responses, such as cell adhesion, polarization and migration. Involved also in the regulation of neutrophil polarization, chemotaxis and adhesion. Required for normal development of inner and outer hair cell stereocilia within the cochlea of the inner ear. Plays a role for maintaining the structural organization of the basal domain of stereocilia. Involved in mechanosensory hair cell function. Required for normal hearing. The polypeptide is Rho family-interacting cell polarization regulator 2 (Mus musculus (Mouse)).